The primary structure comprises 365 residues: Palmitoyltransferase ZDHHC20 (365 aa).

The Cytoplasmic segment spans residues 1 to 14 (MAPCTLWRCCQRTV). A helical membrane pass occupies residues 15–35 (GWVPVLFITFVVVWSYYAYVV). Topologically, residues 36-53 (ELCVFTLSGNGENGKAVV) are lumenal. Residues 54–74 (YLVAFHLFFVMFVWSYWMTIF) traverse the membrane as a helical segment. Over 75 to 169 (TSPASPSKEF…NNCVGFSNYK (95 aa)) the chain is Cytoplasmic. One can recognise a DHHC domain in the interval 126 to 176 (RYCERCQLIKPDRAHHCSACDMCILKMDHHCPWVNNCVGFSNYKFFLLFLF). Residues C128 and C131 each contribute to the Zn(2+) site. Substrate-binding positions include K135 and 140-143 (HHCS). Zn(2+) contacts are provided by H141, C142, C145, C148, and H155. The active-site S-palmitoyl cysteine intermediate is the C156. C162 contacts Zn(2+). The chain crosses the membrane as a helical span at residues 170–190 (FFLLFLFYSLLYCLFVATTVL). Residues 191-207 (QYFIKFWTNELTDTRAK) lie on the Lumenal side of the membrane. Residues 208 to 231 (FHVLFLFFVSTMFFISVLSLLSYH) form a helical membrane-spanning segment. The Cytoplasmic segment spans residues 232 to 365 (CWLVGKNRTT…NNHVTVAIEN (134 aa)). Positions 301-365 (PEQASVSNQS…NNHVTVAIEN (65 aa)) are disordered. The segment covering 302–321 (EQASVSNQSESARSIGSNQP) has biased composition (polar residues). Residues S305 and S330 each carry the phosphoserine modification.

The protein belongs to the DHHC palmitoyltransferase family. Post-translationally, autopalmitoylated (in vitro).

Its subcellular location is the golgi apparatus membrane. The protein resides in the cell membrane. It is found in the cytoplasm. The protein localises to the perinuclear region. It localises to the endoplasmic reticulum membrane. Its subcellular location is the endoplasmic reticulum-Golgi intermediate compartment membrane. The enzyme catalyses L-cysteinyl-[protein] + hexadecanoyl-CoA = S-hexadecanoyl-L-cysteinyl-[protein] + CoA. The catalysed reaction is L-cysteinyl-[protein] + tetradecanoyl-CoA = S-tetradecanoyl-L-cysteinyl-[protein] + CoA. It carries out the reaction L-cysteinyl-[protein] + octadecanoyl-CoA = S-octadecanoyl-L-cysteinyl-[protein] + CoA. In terms of biological role, palmitoyltransferase that could catalyze the addition of palmitate onto various protein substrates. Catalyzes palmitoylation of Cys residues in the cytoplasmic C-terminus of EGFR, and modulates the duration of EGFR signaling by modulating palmitoylation-dependent EGFR internalization and degradation. Has a preference for acyl-CoA with C16 fatty acid chains. Can also utilize acyl-CoA with C14 and C18 fatty acid chains. May palmitoylate CALHM1 subunit of gustatory voltage-gated ion channels and modulate channel gating and kinetics. The sequence is that of Palmitoyltransferase ZDHHC20 from Bos taurus (Bovine).